A 604-amino-acid polypeptide reads, in one-letter code: Elongation factor 4 (604 aa).

In terms of domain architecture, tr-type G spans S7 to A189. GTP contacts are provided by residues D19 to T24 and N136 to D139.

Belongs to the TRAFAC class translation factor GTPase superfamily. Classic translation factor GTPase family. LepA subfamily.

The protein resides in the cell inner membrane. It catalyses the reaction GTP + H2O = GDP + phosphate + H(+). In terms of biological role, required for accurate and efficient protein synthesis under certain stress conditions. May act as a fidelity factor of the translation reaction, by catalyzing a one-codon backward translocation of tRNAs on improperly translocated ribosomes. Back-translocation proceeds from a post-translocation (POST) complex to a pre-translocation (PRE) complex, thus giving elongation factor G a second chance to translocate the tRNAs correctly. Binds to ribosomes in a GTP-dependent manner. The sequence is that of Elongation factor 4 from Prochlorococcus marinus (strain MIT 9313).